We begin with the raw amino-acid sequence, 62 residues long: Large ribosomal subunit protein bL33 (62 aa).

This sequence belongs to the bacterial ribosomal protein bL33 family.

The polypeptide is Large ribosomal subunit protein bL33 (Bacteroides thetaiotaomicron (strain ATCC 29148 / DSM 2079 / JCM 5827 / CCUG 10774 / NCTC 10582 / VPI-5482 / E50)).